We begin with the raw amino-acid sequence, 516 residues long: L-amino-acid oxidase (516 aa).

The signal sequence occupies residues 1–18; the sequence is MNVFFMFSLLFLAALGSC. A disulfide bridge links cysteine 28 with cysteine 191. FAD-binding positions include 61-62, 81-82, arginine 89, and 105-108; these read MA, EA, and GPMR. Arginine 108 contributes to the substrate binding site. N-linked (GlcNAc...) (complex) asparagine glycosylation occurs at asparagine 190. Substrate is bound at residue histidine 241. Valine 279 is an FAD binding site. Residues cysteine 349 and cysteine 430 are joined by a disulfide bond. N-linked (GlcNAc...) (complex) asparagine glycosylation occurs at asparagine 379. A substrate-binding site is contributed by tyrosine 390. FAD-binding positions include glutamate 475 and 482 to 487; that span reads GWIDST. 482 to 483 is a binding site for substrate; it reads GW.

Homodimer; non-covalently linked. The cofactor is FAD. N-glycosylated at Asn-190 and Asn-379 with bis-sialylated, biantennary, core-fucosylated dodecasaccharide (composed of N-acetylglucosamine, fucose, mannose, galactose, and sialic acid residues). As to expression, expressed by the venom gland.

It localises to the secreted. It carries out the reaction an L-alpha-amino acid + O2 + H2O = a 2-oxocarboxylate + H2O2 + NH4(+). The catalysed reaction is L-leucine + O2 + H2O = 4-methyl-2-oxopentanoate + H2O2 + NH4(+). It catalyses the reaction L-phenylalanine + O2 + H2O = 3-phenylpyruvate + H2O2 + NH4(+). The enzyme catalyses L-tryptophan + O2 + H2O = indole-3-pyruvate + H2O2 + NH4(+). It carries out the reaction L-methionine + O2 + H2O = 4-methylsulfanyl-2-oxobutanoate + H2O2 + NH4(+). The catalysed reaction is L-isoleucine + O2 + H2O = (S)-3-methyl-2-oxopentanoate + H2O2 + NH4(+). It catalyses the reaction L-arginine + O2 + H2O = 5-guanidino-2-oxopentanoate + H2O2 + NH4(+). The enzyme catalyses L-aspartate + O2 + H2O = oxaloacetate + H2O2 + NH4(+). It carries out the reaction L-histidine + O2 + H2O = 3-(imidazol-5-yl)pyruvate + H2O2 + NH4(+). The catalysed reaction is L-2-aminohexanoate + O2 + H2O = 2-oxohexanoate + H2O2 + NH4(+). It catalyses the reaction L-2-aminopentanoate + O2 + H2O = 2-oxopentanoate + H2O2 + NH4(+). Functionally, catalyzes an oxidative deamination of predominantly hydrophobic and aromatic L-amino acids, thus producing hydrogen peroxide that may contribute to the diverse toxic effects of this enzyme. Shows high affinity for L-Phe, L-Trp, L-Met, L-Leu, and L-Ile, moderate affinity for L-Arg, L-Asp, and L-His, and very low affinity for L-Gln, L-Lys, and L-Ala. Also shows high activity on L-norleucine (L-2-aminohexanoate), and L-norvaline (L-2-aminopentanoate) and a weak activity on L-ornithine and L-aminobutyric acid. Also exhibits diverse biological activities, such as hemorrhage, hemolysis, edema, apoptosis of vascular endothelial cells or tumor cell lines, and antiparasitic activities, as well as regulation of platelet aggregation. Its effect on platelets is controversial, since it either induces aggregation or inhibits agonist-induced aggregation. These different effects are probably due to different experimental conditions. A possible explanation of high efficacy it that LAAO may bind to target cells through its sialylated glycan moiety that would bind to sialic acid-binding lectins (siglec) on target cells. This interaction may result in production of locally high concentrations of hydrogen peroxide in or near the binding interface, leading, in turn to oxidative damage of the siglec or another adjacent cell structural elements. The chain is L-amino-acid oxidase from Calloselasma rhodostoma (Malayan pit viper).